Consider the following 84-residue polypeptide: U4-theraphotoxin-Hhn1a (84 aa).

An N-terminal signal peptide occupies residues 1–22 (MKVTLIAILTCAAVLVLHTTAA). Residues 23-47 (EELEESQLMEVGMPDTELAAVDEER) constitute a propeptide that is removed on maturation. Cystine bridges form between Cys-51/Cys-65, Cys-55/Cys-76, and Cys-70/Cys-81.

It belongs to the neurotoxin 12 (Hwtx-2) family. 02 (Hwtx-2) subfamily. Expressed by the venom gland.

The protein localises to the secreted. Functionally, postsynaptic neurotoxin. The chain is U4-theraphotoxin-Hhn1a from Cyriopagopus hainanus (Chinese bird spider).